The primary structure comprises 828 residues: MHKIEKKWQKIWQEEKAFQVSNESSKPKYYVLEMLPYPSGKIHIGHVRNYSIGDVIARFMTMQGFNVLHPMGWDAFGLPAENAAIKNNSRPQDWTYSNIEYMKKQLQSMGFAYDWTREINSCDPEYYKHEQKFFLELYDRNLVYQKESLVNWDPVDNTVLANEQVVDGRGWRSGAIIEKRYLKQWFLKITDYAEELLNEIQNLKDWPAAVRVMQEEWIGKSTGVNFHFKVKYHENTTIEVFSTKPETIFGASFIGIAFNHPIIEQLICKTPEIVNFITKCSYITRSSEIDKAEKEGIFSGLYVIHPFDANIFLPVIITNFVLMDYGTGAIFGCPAHDKRDHELAIKMNLPIKQVIETGNIQEGILINSDWLNGLTSSEAKQKVIEKFEKLGIGKRSVNYRLKDWSISRQRFWGCPIPMIHCKTCGVVPVPYKDLPVTLPDDVSFDSNYNPLEHHSSWKYVNCPKCDNSAIRETDTFDTFFESSWYFTRYCNSNAVEMTDKKACNYWLPVDKYIGGIEHAVMHLLYARFFTKLMNEHNYVSIREPFKGLFTQGMVLHATYKDENNNWLYPAEVVKKGNEFFHKENNTRVVQGRIEKMSKSKKNIIDLETIREQYSADAIRLFVLSDSPPEKDLEWSASGIEGCSRFINKLENMFEAIFSLKDDMKSEINKDLNRLIHLTIKHVADDIKTFSLNRAIARMRTLTNAIYYEISKDRIDVRTIKYGFNVLVQLLNPFIPHITEEIWQKLGNKERLYKSVFAEFDESILELSTYIMAVQVNGKLRDTYEFDVDISEDEVKQITVNLPKVQKFLAGKEPRNIILVPRKIVNIIV.

The 'HIGH' region signature appears at 36-46; the sequence is PYPSGKIHIGH. The 'KMSKS' region motif lies at 595–599; that stretch reads KMSKS. Position 598 (Lys598) interacts with ATP.

This sequence belongs to the class-I aminoacyl-tRNA synthetase family.

The protein resides in the cytoplasm. It catalyses the reaction tRNA(Leu) + L-leucine + ATP = L-leucyl-tRNA(Leu) + AMP + diphosphate. The polypeptide is Leucine--tRNA ligase (Rickettsia prowazekii (strain Madrid E)).